Reading from the N-terminus, the 1496-residue chain is DNA-directed RNA polymerase subunit beta' (1496 aa).

Zn(2+) contacts are provided by Cys-70, Cys-72, Cys-85, and Cys-88. 3 residues coordinate Mg(2+): Asp-461, Asp-463, and Asp-465. Cys-908, Cys-982, Cys-989, and Cys-992 together coordinate Zn(2+). The disordered stretch occupies residues 1467-1496 (DKDMQVEGESEVPAIPPVAEGSAPEAPPAE).

It belongs to the RNA polymerase beta' chain family. In terms of assembly, the RNAP catalytic core consists of 2 alpha, 1 beta, 1 beta' and 1 omega subunit. When a sigma factor is associated with the core the holoenzyme is formed, which can initiate transcription. The cofactor is Mg(2+). Zn(2+) is required as a cofactor.

It carries out the reaction RNA(n) + a ribonucleoside 5'-triphosphate = RNA(n+1) + diphosphate. DNA-dependent RNA polymerase catalyzes the transcription of DNA into RNA using the four ribonucleoside triphosphates as substrates. This is DNA-directed RNA polymerase subunit beta' from Paramagnetospirillum magneticum (strain ATCC 700264 / AMB-1) (Magnetospirillum magneticum).